We begin with the raw amino-acid sequence, 523 residues long: Ubiquilin (523 aa).

The region spanning 2–77 (VKINIKSSTD…VHLVKGAAPP (76 aa)) is the Ubiquitin-like domain. The segment at 70–99 (LVKGAAPPPPPPVEQQVPTPSNTQPQGIPG) is disordered. STI1 domains follow at residues 100–135 (VPQNINDMMNNPMIQEMFNSRMMDSLLDNPDIFRDM) and 139–178 (NPEMREVLNNNPEMAQMLSDPRQLRQSLEMMRNPELMREM). Residues 215-227 (NQQAASQNQTNSN) show a composition bias toward low complexity. The interval 215–325 (NQQAASQNQT…ASMFGGGGGG (111 aa)) is disordered. A compositionally biased stretch (polar residues) spans 228-241 (PIQTNTDANPNSQP). Positions 245 to 278 (PWSTNSSSTSSNPTSSSPSSRPTTGSSTNTGASN) are enriched in low complexity. Residues 285–296 (SGGGGGMGGGTN) show a composition bias toward gly residues. Residues 297–310 (NTGTNNTGSTNNTG) show a composition bias toward low complexity. STI1 domains follow at residues 339 to 380 (DPER…RQMM) and 383 to 415 (NPQLREAMNNPEFLNMMTNPENMNAMMQLQQAM). Residues 480 to 523 (PPEQRFRLQLEQLEELGFVDRAANISALTSTNGNINLAIDRLLR) form the UBA domain.

Stable protein which acts as an antagonist of nosA by repressing cellular differentiation after the tight-aggregate stage, when cells differentiate into two precursor cell types, prespore and prestalk cells, prior to the formation of fruiting bodies. This chain is Ubiquilin (ubqln), found in Dictyostelium discoideum (Social amoeba).